Consider the following 191-residue polypeptide: uncharacterized protein (191 aa).

One can recognise an HTH tetR-type domain in the interval 6–66; sequence GLTQKMIVDA…ELAVRGLTKL (61 aa). A DNA-binding region (H-T-H motif) is located at residues 29 to 48; the sequence is SLAALSKKMNVRPPSLYNHI.

This is an uncharacterized protein from Bacillus subtilis (strain 168).